The following is a 188-amino-acid chain: MEPNPSDPVLTDRIQAIVTTEKSIDEMMKCAREIIQDLGKEKQIGKNKMEDNANNFKKLITQVENELSAQMQYLSHVCVGSSHQGSTFGVLQNSLLAQSGLSSLHSELFQIVRYLDPTSDEPQTTEEDEEDGSDDLNEDGADGAPSSTVTSSTTDGSGGGDDAASSSAPRSQEESGRQMTDDDDDMEQ.

Residues K46 to Q72 adopt a coiled-coil conformation. The disordered stretch occupies residues D116–Q188. Residues Q123–A141 show a composition bias toward acidic residues. The span at S146–D155 shows a compositional bias: low complexity. The span at S171–T180 shows a compositional bias: basic and acidic residues.

It belongs to the Mediator complex subunit 11 family. Component of the Mediator complex.

The protein resides in the nucleus. Its function is as follows. Component of the Mediator complex, a coactivator involved in the regulated transcription of nearly all RNA polymerase II-dependent genes. Mediator functions as a bridge to convey information from gene-specific regulatory proteins to the basal RNA polymerase II transcription machinery. Mediator is recruited to promoters by direct interactions with regulatory proteins and serves as a scaffold for the assembly of a functional pre-initiation complex with RNA polymerase II and the general transcription factors. The polypeptide is Mediator of RNA polymerase II transcription subunit 11 (mdt-11) (Caenorhabditis elegans).